The chain runs to 491 residues: Keratin, type I cytoskeletal 39 (491 aa).

Residues 1-96 (MDTKGCTTTN…WYGEGINSNE (96 aa)) form a head region. Positions 96–407 (EKETMQILNE…SLLESSDGKR (312 aa)) constitute an IF rod domain. Positions 97–131 (KETMQILNERLANYLQKVRMLERENAELESKIQEE) are coil 1A. Residues 132–142 (SNKELPVLCPD) are linker 1. The coil 1B stretch occupies residues 143 to 243 (YLSYYTTIEE…HKEEINSLQC (101 aa)). Residues 244–259 (QLGERLDIEVTAAPSA) are linker 12. Residues 260–403 (DLNQVLQEMR…TTYRSLLESS (144 aa)) are coil 2. A tail region spans residues 404 to 491 (DGKRPCYPRA…PCFIIRPAKV (88 aa)).

The protein belongs to the intermediate filament family. As to quaternary structure, heterotetramer of two type I and two type II keratins. As to expression, expressed in skin and scalp. In the hair follicle, it is present in the upper hair cuticle and the upper cortex. Also present in the in the upper portion of beard hairs (at protein level).

In terms of biological role, may play a role in late hair differentiation. The chain is Keratin, type I cytoskeletal 39 (KRT39) from Homo sapiens (Human).